Consider the following 66-residue polypeptide: Large ribosomal subunit protein bL35 (66 aa).

Positions 19–45 are disordered; that stretch reads SGKVVAAQSTKRHGMTKRSKRSLRTRR. Over residues 28 to 45 the composition is skewed to basic residues; that stretch reads TKRHGMTKRSKRSLRTRR.

Belongs to the bacterial ribosomal protein bL35 family.

This is Large ribosomal subunit protein bL35 from Anaplasma phagocytophilum (strain HZ).